Reading from the N-terminus, the 387-residue chain is Enoyl-[acyl-carrier-protein] reductase 2, mitochondrial (387 aa).

Residues 1 to 23 (MYRNQLARASLRSTSSINQIRNM) constitute a mitochondrion transit peptide. Residue Tyr-79 is the Proton donor of the active site. NADP(+) contacts are provided by residues Asn-172, 199 to 202 (NSAV), 222 to 224 (RDR), 297 to 300 (YGGM), 322 to 324 (FWV), and Lys-382.

Belongs to the zinc-containing alcohol dehydrogenase family. Quinone oxidoreductase subfamily. As to quaternary structure, homodimer.

The protein localises to the mitochondrion matrix. It catalyses the reaction a 2,3-saturated acyl-[ACP] + NADP(+) = a (2E)-enoyl-[ACP] + NADPH + H(+). Catalyzes the NADPH-dependent reduction of trans-2-enoyl thioesters in mitochondrial fatty acid synthesis (fatty acid synthesis type II). Fatty acid chain elongation in mitochondria uses acyl carrier protein (ACP) as an acyl group carrier, but the enzyme accepts both ACP and CoA thioesters as substrates in vitro. Required for respiration and the maintenance of the mitochondrial compartment. The polypeptide is Enoyl-[acyl-carrier-protein] reductase 2, mitochondrial (ETR2) (Debaryomyces hansenii (strain ATCC 36239 / CBS 767 / BCRC 21394 / JCM 1990 / NBRC 0083 / IGC 2968) (Yeast)).